The chain runs to 200 residues: Large ribosomal subunit protein uL4 (200 aa).

The tract at residues 42 to 65 is disordered; the sequence is TRAQKTRSEVSGGGAKPWRQKGTG.

It belongs to the universal ribosomal protein uL4 family. Part of the 50S ribosomal subunit.

In terms of biological role, one of the primary rRNA binding proteins, this protein initially binds near the 5'-end of the 23S rRNA. It is important during the early stages of 50S assembly. It makes multiple contacts with different domains of the 23S rRNA in the assembled 50S subunit and ribosome. Forms part of the polypeptide exit tunnel. This chain is Large ribosomal subunit protein uL4, found in Aliivibrio fischeri (strain MJ11) (Vibrio fischeri).